The sequence spans 75 residues: Dermaseptin-SP4 (75 aa).

The signal sequence occupies residues 1 to 22 (MAFLKKSLFLVLFLGLVSLSMC). The propeptide occupies 23 to 45 (EEEKRENEVEEEQEDDEQSELRR). P72 is modified (proline amide). Positions 74-75 (EQ) are excised as a propeptide.

Belongs to the frog skin active peptide (FSAP) family. Dermaseptin subfamily. Expressed by the skin glands.

It localises to the secreted. The protein resides in the target cell membrane. Its function is as follows. Antimicrobial peptide with activity against Gram-positive and Gram-negative bacteria and fungi. Has been tested against E.coli (MIC=47.25-128 uM), S.aureus (MIC=189-512 uM), K.pneumoniae (MIC=189 uM) and C.albicans (MIC&gt;189 uM). Probably acts by disturbing membrane functions with its alpha-helical amphipathic structure. May penetrate bacterial membranes, but stay at the mammalian membrane surface. Shows a weak hemolytic activity. This chain is Dermaseptin-SP4, found in Agalychnis spurrelli (Gliding leaf frog).